The primary structure comprises 177 residues: Protein LIGHT-DEPENDENT SHORT HYPOCOTYLS 10 (177 aa).

The span at 1-10 shows a compositional bias: basic and acidic residues; that stretch reads MSSPRERGKS. 2 disordered regions span residues 1–31 and 144–177; these read MSSPRERGKSLMESSGSEPPVTPSRYESQKR and RGIPYKKKKKKKPTPEMGGGREDSSSSSSSFSFS. The ALOG domain maps to 25 to 152; the sequence is RYESQKRRDW…ARGIPYKKKK (128 aa). The short motif at 150–154 is the Nuclear localization signal element; the sequence is KKKKK. A compositionally biased stretch (low complexity) spans 168–177; the sequence is SSSSSSFSFS.

Belongs to the plant homeotic and developmental regulators ALOG protein family.

Its subcellular location is the nucleus. Functionally, probable transcription regulator that acts as a developmental regulator by promoting cell growth in response to light. This is Protein LIGHT-DEPENDENT SHORT HYPOCOTYLS 10 (LSH10) from Arabidopsis thaliana (Mouse-ear cress).